The following is a 207-amino-acid chain: ATP-dependent Clp protease proteolytic subunit (207 aa).

The Nucleophile role is filled by S111. Residue H136 is part of the active site.

Belongs to the peptidase S14 family. As to quaternary structure, fourteen ClpP subunits assemble into 2 heptameric rings which stack back to back to give a disk-like structure with a central cavity, resembling the structure of eukaryotic proteasomes.

The protein localises to the cytoplasm. The enzyme catalyses Hydrolysis of proteins to small peptides in the presence of ATP and magnesium. alpha-casein is the usual test substrate. In the absence of ATP, only oligopeptides shorter than five residues are hydrolyzed (such as succinyl-Leu-Tyr-|-NHMec, and Leu-Tyr-Leu-|-Tyr-Trp, in which cleavage of the -Tyr-|-Leu- and -Tyr-|-Trp bonds also occurs).. Its function is as follows. Cleaves peptides in various proteins in a process that requires ATP hydrolysis. Has a chymotrypsin-like activity. Plays a major role in the degradation of misfolded proteins. In Aeromonas salmonicida (strain A449), this protein is ATP-dependent Clp protease proteolytic subunit.